We begin with the raw amino-acid sequence, 469 residues long: GDNF family receptor alpha-1 (469 aa).

Positions 1–27 (MFLALLYLALPLADVLLSAEVSGLPGG) are cleaved as a signal peptide. Tandem repeats lie at residues 28 to 116 (DRLD…LQGN), 149 to 237 (KGNN…YEDR), and 238 to 341 (EKPN…KNAI). A disulfide bond links C39 and C45. N-linked (GlcNAc...) asparagine glycans are attached at residues N62 and N163. Cystine bridges form between C153-C213, C160-C166, C177-C191, C186-C232, C215-C220, C242-C312, C249-C255, C266-C284, C276-C336, and C314-C324. N346 and N405 each carry an N-linked (GlcNAc...) asparagine glycan. A lipid anchor (GPI-anchor amidated serine) is attached at S430. Residues 431 to 469 (HISSENSFALPTSFYPSTPLILMTIALSLFLFLSSSVVL) constitute a propeptide, removed in mature form.

This sequence belongs to the GDNFR family. As to quaternary structure, interacts with GDNF ligand and RET: forms a 2:2:2 ternary complex composed of GDNF ligand, GFRA1 and RET receptor.

Its subcellular location is the cell membrane. It is found in the golgi apparatus. It localises to the trans-Golgi network. The protein resides in the endosome. The protein localises to the multivesicular body. Its function is as follows. Coreceptor for GDNF, a neurotrophic factor that enhances survival and morphological differentiation of dopaminergic neurons and increases their high-affinity dopamine uptake. GDNF-binding leads to autophosphorylation and activation of the RET receptor. The sequence is that of GDNF family receptor alpha-1 (GFRA1) from Gallus gallus (Chicken).